The following is a 226-amino-acid chain: UPF0173 metal-dependent hydrolase CHY_0920 (226 aa).

Belongs to the UPF0173 family.

The polypeptide is UPF0173 metal-dependent hydrolase CHY_0920 (Carboxydothermus hydrogenoformans (strain ATCC BAA-161 / DSM 6008 / Z-2901)).